A 208-amino-acid polypeptide reads, in one-letter code: Uracil phosphoribosyltransferase (208 aa).

5-phospho-alpha-D-ribose 1-diphosphate-binding positions include arginine 78, arginine 103, and 130 to 138; that span reads DPMFATGGT. Uracil-binding positions include isoleucine 193 and 198–200; that span reads GDA. Aspartate 199 contacts 5-phospho-alpha-D-ribose 1-diphosphate.

It belongs to the UPRTase family. Mg(2+) serves as cofactor.

The enzyme catalyses UMP + diphosphate = 5-phospho-alpha-D-ribose 1-diphosphate + uracil. It participates in pyrimidine metabolism; UMP biosynthesis via salvage pathway; UMP from uracil: step 1/1. Its activity is regulated as follows. Allosterically activated by GTP. Functionally, catalyzes the conversion of uracil and 5-phospho-alpha-D-ribose 1-diphosphate (PRPP) to UMP and diphosphate. This chain is Uracil phosphoribosyltransferase, found in Campylobacter jejuni subsp. jejuni serotype O:2 (strain ATCC 700819 / NCTC 11168).